Consider the following 178-residue polypeptide: Probable coatomer subunit zeta-B (178 aa).

This sequence belongs to the adaptor complexes small subunit family. In terms of assembly, oligomeric complex that consists of at least the alpha, beta, beta', gamma, delta, epsilon and zeta subunits.

The protein resides in the cytoplasm. It localises to the golgi apparatus membrane. It is found in the cytoplasmic vesicle. The protein localises to the COPI-coated vesicle membrane. The coatomer is a cytosolic protein complex that binds to dilysine motifs and reversibly associates with Golgi non-clathrin-coated vesicles, which further mediate biosynthetic protein transport from the ER, via the Golgi up to the trans Golgi network. Coatomer complex is required for budding from Golgi membranes, and is essential for the retrograde Golgi-to-ER transport of dilysine-tagged proteins. The zeta subunit may be involved in regulating the coat assembly and, hence, the rate of biosynthetic protein transport due to its association-dissociation properties with the coatomer complex. This Dictyostelium discoideum (Social amoeba) protein is Probable coatomer subunit zeta-B (copZb).